A 215-amino-acid polypeptide reads, in one-letter code: Cytochrome b6 (215 aa).

A helical transmembrane segment spans residues 32–52; it reads IFYCLGGITLTCFLIQVATGF. C35 provides a ligand contact to heme c. The heme b site is built by H86 and H100. 3 helical membrane-spanning segments follow: residues 90-110, 116-136, and 186-206; these read ASMM…TGGF, LTWV…VTGY, and LHTF…FLMI. The heme b site is built by H187 and H202.

The protein belongs to the cytochrome b family. PetB subfamily. In terms of assembly, the 4 large subunits of the cytochrome b6-f complex are cytochrome b6, subunit IV (17 kDa polypeptide, PetD), cytochrome f and the Rieske protein, while the 4 small subunits are PetG, PetL, PetM and PetN. The complex functions as a dimer. Heme b is required as a cofactor. Requires heme c as cofactor.

The protein resides in the plastid. It is found in the chloroplast thylakoid membrane. Functionally, component of the cytochrome b6-f complex, which mediates electron transfer between photosystem II (PSII) and photosystem I (PSI), cyclic electron flow around PSI, and state transitions. In Spirogyra maxima (Green alga), this protein is Cytochrome b6.